A 402-amino-acid chain; its full sequence is Olfactomedin-like protein 1 (402 aa).

An N-terminal signal peptide occupies residues 1-28; that stretch reads MMVALPGASASLVLFLAAFLPPLQHAQD. Asparagine 66 carries an N-linked (GlcNAc...) asparagine glycan. Residues 73 to 135 adopt a coiled-coil conformation; that stretch reads RCQTHTNEYR…EAEEEKKIRT (63 aa). N-linked (GlcNAc...) asparagine glycosylation is found at asparagine 138 and asparagine 183. Residues 140–397 form the Olfactomedin-like domain; it reads SCDNMLMAIK…QIIYKLQTKK (258 aa). Residues cysteine 141 and cysteine 324 are joined by a disulfide bond.

Highly N-glycosylated.

It localises to the secreted. This chain is Olfactomedin-like protein 1 (Olfml1), found in Rattus norvegicus (Rat).